Here is a 392-residue protein sequence, read N- to C-terminus: 2-oxoisovalerate dehydrogenase subunit beta, mitochondrial (392 aa).

The N-terminal 50 residues, 1 to 50 (MAVVAAAAGWLLRLRAAGAEGHWRRLPGAGLARGFLHPAATVEDAAQRRQ), are a transit peptide targeting the mitochondrion. Position 152 (tyrosine 152) interacts with thiamine diphosphate. The K(+) site is built by glycine 178, leucine 180, threonine 181, cysteine 228, and aspartate 231. Lysine 232 bears the N6-acetyllysine mark. Position 233 (asparagine 233) interacts with K(+). Position 241 is an N6-acetyllysine (lysine 241).

In terms of assembly, heterotetramer of 2 alpha/BCKDHA and 2 beta chains/BCKDHB that forms the branched-chain alpha-keto acid decarboxylase (E1) component of the BCKD complex. The branched-chain alpha-ketoacid dehydrogenase is a large complex composed of three major building blocks E1, E2 and E3. It is organized around E2, a 24-meric cubic core composed of DBT, to which are associated 6 to 12 copies of E1, and approximately 6 copies of the dehydrogenase E3, a DLD dimer. It depends on thiamine diphosphate as a cofactor.

It is found in the mitochondrion matrix. The enzyme catalyses N(6)-[(R)-lipoyl]-L-lysyl-[protein] + 3-methyl-2-oxobutanoate + H(+) = N(6)-[(R)-S(8)-2-methylpropanoyldihydrolipoyl]-L-lysyl-[protein] + CO2. Together with BCKDHA forms the heterotetrameric E1 subunit of the mitochondrial branched-chain alpha-ketoacid dehydrogenase (BCKD) complex. The BCKD complex catalyzes the multi-step oxidative decarboxylation of alpha-ketoacids derived from the branched-chain amino-acids valine, leucine and isoleucine producing CO2 and acyl-CoA which is subsequently utilized to produce energy. The E1 subunit catalyzes the first step with the decarboxylation of the alpha-ketoacid forming an enzyme-product intermediate. A reductive acylation mediated by the lipoylamide cofactor of E2 extracts the acyl group from the E1 active site for the next step of the reaction. The sequence is that of 2-oxoisovalerate dehydrogenase subunit beta, mitochondrial from Homo sapiens (Human).